A 200-amino-acid polypeptide reads, in one-letter code: Rubrerythrin (200 aa).

The Ferritin-like diiron domain occupies 12–155 (SIKGSKTEKH…ALLAHVEDGS (144 aa)). Fe(3+) contacts are provided by Glu-29, Glu-62, Glu-103, Glu-106, Glu-137, His-140, Cys-167, Cys-170, Cys-183, and Cys-186. The Rubredoxin-like domain maps to 162–200 (EIAWQCRNCGYVITSKKAPKLCPACAHPQAYFEPMKTNY).

Homodimer. Possesses two rubredoxin-like centers and two non-sulfur oxo-bridged di-iron centers per dimer. Fe(3+) serves as cofactor.

The protein resides in the cytoplasm. May provide oxidative stress protection via catalytic reduction of intracellular hydrogen peroxide. The protein is Rubrerythrin (rbr) of Porphyromonas gingivalis (strain ATCC BAA-308 / W83).